The chain runs to 191 residues: Penicillin-binding protein activator LpoB (191 aa).

The first 16 residues, 1–16 (MKRILFVILSTMLLAS), serve as a signal peptide directing secretion. Cys17 carries the N-palmitoyl cysteine lipid modification. Residue Cys17 is the site of S-diacylglycerol cysteine attachment. Residues 25–48 (QPAPVTPVEPKEKQETTPIEPSEK) are disordered.

Belongs to the LpoB family. Interacts with PBP1b.

The protein resides in the cell outer membrane. Regulator of peptidoglycan synthesis that is essential for the function of penicillin-binding protein 1B (PBP1b). The sequence is that of Penicillin-binding protein activator LpoB from Xenorhabdus nematophila (strain ATCC 19061 / DSM 3370 / CCUG 14189 / LMG 1036 / NCIMB 9965 / AN6).